Reading from the N-terminus, the 170-residue chain is ATP synthase subunit b (170 aa).

Residues Ile-22–Gly-41 form a helical membrane-spanning segment. Residues Leu-76–Arg-98 form a disordered region. Basic and acidic residues predominate over residues Asp-89–Arg-98.

The protein belongs to the ATPase B chain family. F-type ATPases have 2 components, F(1) - the catalytic core - and F(0) - the membrane proton channel. F(1) has five subunits: alpha(3), beta(3), gamma(1), delta(1), epsilon(1). F(0) has four main subunits: a(1), b(1), b'(1) and c(10-14). The alpha and beta chains form an alternating ring which encloses part of the gamma chain. F(1) is attached to F(0) by a central stalk formed by the gamma and epsilon chains, while a peripheral stalk is formed by the delta, b and b' chains.

The protein localises to the cellular thylakoid membrane. Its function is as follows. F(1)F(0) ATP synthase produces ATP from ADP in the presence of a proton or sodium gradient. F-type ATPases consist of two structural domains, F(1) containing the extramembraneous catalytic core and F(0) containing the membrane proton channel, linked together by a central stalk and a peripheral stalk. During catalysis, ATP synthesis in the catalytic domain of F(1) is coupled via a rotary mechanism of the central stalk subunits to proton translocation. Component of the F(0) channel, it forms part of the peripheral stalk, linking F(1) to F(0). This is ATP synthase subunit b from Prochlorococcus marinus (strain AS9601).